Reading from the N-terminus, the 1117-residue chain is MDYFGMLEEKTKELYAIAREARKQGKDLELEPEIPLAKDLAERVEGLVGPEGVAKRIKELEKSMSREEVAFQIAKEIATKDDVEGQPNDYEVQEANADSAIRTALAILTEGVVAAPLEGIAKVKIKDNSDGTKCFGVYFAGPIRSAGGTAAALAVLLGDYIRMSQGLDRYKPTDDEIERYVEEVELYESEVTNLQYSPTPDEVRLAIRGIPVEVTGEQTDPVEVQNRDLPRVETNNLRGGALLAVAEGVIQKSRKIVKYAKTLKIDGWDWLEYFTAPKSTKEEEKKKEESSENKPKKKAKYMEDIIGGRPVMSYPGAKGGFRLRYGRTRDSGLASMAIHPATMEIVEFLAIGTQMKIEKPGKGNCVVPCDSIEGPIVKLKNGDVIQVNDVSKAISIRRDVNEIIFLGDMLVAFGEYLRGNIPLDVSAWCEEWWAQEIEASEYFKETHDTFGIDFNENMELNALLKLDIDAKKAFDIAKKTNTPLHPKFTFYYNDVTKEELNDLHNYLYSLIDSPEDVFKSDMNRIPIDYHKRIIEVLGIPHHVNNKSLIMSNDNLYTLMSVLNKSLSPDEDMETIEAVNMISPVSIKSKAPTYIGGRVGRPEKTKERLMKPAPHSLFPIGNYAGNIRNIVEAAKKGTIKVTLAKCKCTNPDCKVSSFKALCPVCGSRTELESSAAKNIKLDKLLMDAFENVNVRRLDEVKGVKGLISEDKYPEPLEKGILRARNDVFTYRDGTIRHDSTDLPLTHFIPREVGVPYEKILEMGYTEDIYGKPITNDNQIIEIKIQDIVVSESCGDYLLKVSKFIDDLLIRYYHMEPFYNAENRVDLVGHLIAGLAPHTSAGVLGRIVGFTKASCCYAHPYFHSAKRRNCDSDEDAVMLLLDALLNFGKTYLPSTRGGSMDAPLVLSIRIDPEEIDDESHNIDCMKRIPLEIYHKTEEGGVKPSDVNDLVDNVESRLGTDNQYHGLMYSHPTSSIHAGPKICLYKTLQTMTDKVESQIALAELLRAVDQKGVVEGVLNSHFLPDMAGNIRAFSRQKVRCTKCGAKYRRIPLSGECTCGNNLILSISKGSVLKYLDISKDLSHRYPINPYVVERIEILETGINSLFESDKSKQSSLDAFF.

Positions 279–294 (STKEEEKKKEESSENK) are enriched in basic and acidic residues. The tract at residues 279-299 (STKEEEKKKEESSENKPKKKA) is disordered.

It belongs to the archaeal DNA polymerase II family. In terms of assembly, heterodimer of a large subunit and a small subunit.

It carries out the reaction DNA(n) + a 2'-deoxyribonucleoside 5'-triphosphate = DNA(n+1) + diphosphate. The enzyme catalyses Exonucleolytic cleavage in the 3'- to 5'-direction to yield nucleoside 5'-phosphates.. Its function is as follows. Possesses two activities: a DNA synthesis (polymerase) and an exonucleolytic activity that degrades single-stranded DNA in the 3'- to 5'-direction. Has a template-primer preference which is characteristic of a replicative DNA polymerase. This Methanosphaera stadtmanae (strain ATCC 43021 / DSM 3091 / JCM 11832 / MCB-3) protein is DNA polymerase II large subunit.